Here is a 234-residue protein sequence, read N- to C-terminus: Sugar fermentation stimulation protein homolog (234 aa).

The protein belongs to the SfsA family.

The chain is Sugar fermentation stimulation protein homolog from Pseudoalteromonas atlantica (strain T6c / ATCC BAA-1087).